The following is a 415-amino-acid chain: Gamma-glutamyl phosphate reductase (415 aa).

It belongs to the gamma-glutamyl phosphate reductase family.

Its subcellular location is the cytoplasm. The enzyme catalyses L-glutamate 5-semialdehyde + phosphate + NADP(+) = L-glutamyl 5-phosphate + NADPH + H(+). Its pathway is amino-acid biosynthesis; L-proline biosynthesis; L-glutamate 5-semialdehyde from L-glutamate: step 2/2. Catalyzes the NADPH-dependent reduction of L-glutamate 5-phosphate into L-glutamate 5-semialdehyde and phosphate. The product spontaneously undergoes cyclization to form 1-pyrroline-5-carboxylate. The protein is Gamma-glutamyl phosphate reductase of Listeria monocytogenes serovar 1/2a (strain ATCC BAA-679 / EGD-e).